The chain runs to 247 residues: 3-deoxy-manno-octulosonate cytidylyltransferase (247 aa).

This sequence belongs to the KdsB family.

Its subcellular location is the cytoplasm. It catalyses the reaction 3-deoxy-alpha-D-manno-oct-2-ulosonate + CTP = CMP-3-deoxy-beta-D-manno-octulosonate + diphosphate. It functions in the pathway nucleotide-sugar biosynthesis; CMP-3-deoxy-D-manno-octulosonate biosynthesis; CMP-3-deoxy-D-manno-octulosonate from 3-deoxy-D-manno-octulosonate and CTP: step 1/1. It participates in bacterial outer membrane biogenesis; lipopolysaccharide biosynthesis. In terms of biological role, activates KDO (a required 8-carbon sugar) for incorporation into bacterial lipopolysaccharide in Gram-negative bacteria. The sequence is that of 3-deoxy-manno-octulosonate cytidylyltransferase from Afipia carboxidovorans (strain ATCC 49405 / DSM 1227 / KCTC 32145 / OM5) (Oligotropha carboxidovorans).